Reading from the N-terminus, the 102-residue chain is Small ribosomal subunit protein uS10 (102 aa).

This sequence belongs to the universal ribosomal protein uS10 family. Part of the 30S ribosomal subunit.

Functionally, involved in the binding of tRNA to the ribosomes. The protein is Small ribosomal subunit protein uS10 of Halalkalibacterium halodurans (strain ATCC BAA-125 / DSM 18197 / FERM 7344 / JCM 9153 / C-125) (Bacillus halodurans).